Consider the following 634-residue polypeptide: Growth hormone receptor (634 aa).

The first 18 residues, 1-18 (MDLWQLLLTLAVAGSSDA), serve as a signal peptide directing secretion. Residues 19–260 (FSGSEATPAF…NPSACEEDFQ (242 aa)) are Extracellular-facing. N-linked (GlcNAc...) asparagine glycosylation occurs at N46. A disulfide bond links C56 and C66. N73 carries an N-linked (GlcNAc...) asparagine glycan. C97 and C108 are joined by a disulfide. The N-linked (GlcNAc...) asparagine glycan is linked to N111. An intrachain disulfide couples C122 to C136. One can recognise a Fibronectin type-III domain in the interval 147 to 250 (PPVGLNWTLL…EVLLITFPQM (104 aa)). 3 N-linked (GlcNAc...) asparagine glycosylation sites follow: N152, N157, and N196. The WSXWS motif signature appears at 236-240 (YGKFS). The chain crosses the membrane as a helical span at residues 261 to 284 (FPWFLIIIFGILGLAVTLYLLIFS). The Cytoplasmic segment spans residues 285-634 (KQQRIKMLIL…STDQLNKIMP (350 aa)). A required for JAK2 binding region spans residues 290-375 (KMLILPPVPV…HEKSLNIFGA (86 aa)). The Box 1 motif motif lies at 293–301 (ILPPVPVPK). The UbE motif signature appears at 336-345 (DSWVEFIELD). Phosphoserine is present on S337.

It belongs to the type I cytokine receptor family. Type 1 subfamily. In terms of assembly, on growth hormone (GH) binding, forms homodimers and binds JAK2 via a box 1-containing domain. The soluble form (GHBP) is produced by phorbol ester-promoted proteolytic cleavage at the cell surface (shedding) by ADAM17/TACE. Shedding is inhibited by growth hormone (GH) binding to the receptor probably due to a conformational change in GHR rendering the receptor inaccessible to ADAM17. In terms of processing, on GH binding, phosphorylated on tyrosine residues in the cytoplasmic domain by JAK2. Post-translationally, ubiquitinated by the ECS(SOCS2) complex following ligand-binding and phosphorylation by JAK2, leading to its degradation by the proteasome. Regulation by the ECS(SOCS2) complex acts as a negative feedback loop of growth hormone receptor signaling. Ubiquitination is not sufficient for GHR internalization.

It is found in the cell membrane. It localises to the secreted. Receptor for pituitary gland growth hormone (GH1) involved in regulating postnatal body growth. On ligand binding, couples to the JAK2/STAT5 pathway. Functionally, the soluble form (GHBP) acts as a reservoir of growth hormone in plasma and may be a modulator/inhibitor of GH signaling. The protein is Growth hormone receptor (GHR) of Bos taurus (Bovine).